Consider the following 1621-residue polypeptide: Ferredoxin-dependent glutamate synthase, chloroplastic (1621 aa).

A chloroplast-targeting transit peptide spans 1-57; it reads MALQSAPKLLYSSPSPSVFSANERRVAFSDFVGLSKKRSRRRRIAGTFRNFPALSAV. C105 serves as the catalytic Nucleophile. The Glutamine amidotransferase type-2 domain maps to 105 to 504; it reads CGVGFIANLD…PGMMISVDLS (400 aa). 1183 to 1240 serves as a coordination point for FMN; that stretch reads LSETHQTLISNGLRERVILRVDGGLKCGVDVMMAAAMGADEYGFGSLAMIATGCVMAR. 3 residues coordinate [3Fe-4S] cluster: C1236, C1242, and C1247.

It belongs to the glutamate synthase family. In terms of assembly, interacts with ferredoxin. Interacts (via FMN-binding domain) with SQD1. Requires [3Fe-4S] cluster as cofactor. FMN serves as cofactor. As to expression, expressed in young leaves. Not detected in mature leaves.

It localises to the plastid. The protein resides in the chloroplast stroma. The enzyme catalyses 2 oxidized [2Fe-2S]-[ferredoxin] + 2 L-glutamate = L-glutamine + 2 reduced [2Fe-2S]-[ferredoxin] + 2-oxoglutarate + 2 H(+). The protein operates within amino-acid biosynthesis; L-glutamate biosynthesis via GLT pathway; L-glutamate from 2-oxoglutarate and L-glutamine (ferredoxin route): step 1/1. Its pathway is energy metabolism; nitrogen metabolism. Its activity is regulated as follows. Inhibited by N-bromosuccinimide, which is specific for modification of tryptophan residues probably involved in the electron transfer from ferredoxin. In terms of biological role, catalyzes the reductive conversion of 2-oxoglutarate plus glutamine to two molecules of glutamate, using reduced ferredoxin as the electron donor. Contains one FMN but no FAD. The FMN-binding domain is also involved in the delivery of sulfite to the reaction center of SQD1. This chain is Ferredoxin-dependent glutamate synthase, chloroplastic, found in Spinacia oleracea (Spinach).